A 344-amino-acid polypeptide reads, in one-letter code: Ubiquitin-associated domain-containing protein 2 (344 aa).

The first 35 residues, 1-35 (MFTSTGSSGLYKAPLSKSLLLVPSALSLLLALLLP), serve as a signal peptide directing secretion. Residues 36-91 (HCQKLFVYDLHAVKNDFQIWRLICGRIICLDLKDTFCSSLLIYNFRIFERRYGSRK) are Extracellular-facing. Residues 92–112 (FASFLLGSWVLSALFDFLLIE) form a helical membrane-spanning segment. At 113–125 (AMQYFFGITAASN) the chain is on the cytoplasmic side. Residues 126-146 (LPSGFLAPVFALFVPFYCSIP) form a helical membrane-spanning segment. Residues 147 to 163 (RVQVAQILGPLSITNKT) are Extracellular-facing. The N-linked (GlcNAc...) asparagine glycan is linked to Asn161. The helical transmembrane segment at 164–184 (LIYILGLQLFTSGSYIWIVAI) threads the bilayer. Over 185 to 344 (SGLMSGLCYD…NVATNFLLQH (160 aa)) the chain is Cytoplasmic. The UBA domain maps to 304 to 344 (EVSEEQVARLMEMGFSRGDALEALRASNNDLNVATNFLLQH).

As to quaternary structure, interacts with FAF2. Interacts with LMBR1L. Interacts with AMFR and VCP.

It is found in the endoplasmic reticulum membrane. Restricts trafficking of FAF2 from the endoplasmic reticulum to lipid droplets. In association with LMBR1L and E3 ubiquitin-protein ligase AMFR, negatively regulates the canonical Wnt signaling pathway in the lymphocytes by promoting the ubiquitin-mediated degradation of CTNNB1 and Wnt receptors FZD6 and LRP6. This is Ubiquitin-associated domain-containing protein 2 (UBAC2) from Homo sapiens (Human).